We begin with the raw amino-acid sequence, 149 residues long: UPF0260 protein PSPTO_3918 (149 aa).

Belongs to the UPF0260 family.

The polypeptide is UPF0260 protein PSPTO_3918 (Pseudomonas syringae pv. tomato (strain ATCC BAA-871 / DC3000)).